Reading from the N-terminus, the 367-residue chain is Protein SUPPRESSOR OF FRI 4 (367 aa).

A BED-type zinc finger spans residues 7–66 (RATEKVWCYYCDREFDDEKILVQHQKAKHFKCHVCHKKLSTASGMVIHVLQVHKENVTKV). Cys-38, Cys-41, His-54, and His-59 together coordinate Zn(2+). Residues 246 to 309 (PFSAPLPVGG…PPVIANKAPS (64 aa)) are disordered. Residues 273–295 (PNNSIPGGTNAHSYASGPNTSGP) are compositionally biased toward polar residues.

Homodimer. Component of the transcription activator complex FRI-C composed of FRI, FRL1, SUF4, FLX and FES1. Interacts with LD, ASHH2, FRL1, (via C-terminus) with FRI (via C-terminus), and with SWC6, a component of the SWR1 chromatin-remodeling complex. Binds to MED18 to regulate flowering time; recruits MED18 to FLC promoter. Expressed in root, shoot apex, leaves, stem and flowers. Expressed in expanding leaves, in the vasculature of fully expanded leaves, in the inflorescence, throughout young floral primordia, in the carpels of older flowers and in fertilized ovules.

The protein resides in the nucleus. Sequence-specific DNA binding factor that recognizes the 5'-CCAAATTTTAAGTTT-3' sequence. Recruits the FRI-C complex to the FLC promoter. Required for FRI-mediated FLC activation, but has no effect on the expression of MAF1, MAF2, MAF3, MAF5, UFC and CO. Dispensable for the reactivation of FLC in early embryogenesis, but required to maintain high levels of FLC expression in later embryonic and vegetative development. The polypeptide is Protein SUPPRESSOR OF FRI 4 (Arabidopsis thaliana (Mouse-ear cress)).